A 185-amino-acid chain; its full sequence is Ribosome maturation factor RimM (185 aa).

In terms of domain architecture, PRC barrel spans 106-185; it reads SGEYYWKDLL…IIEVDWDPGF (80 aa).

Belongs to the RimM family. In terms of assembly, binds ribosomal protein uS19.

Its subcellular location is the cytoplasm. In terms of biological role, an accessory protein needed during the final step in the assembly of 30S ribosomal subunit, possibly for assembly of the head region. Essential for efficient processing of 16S rRNA. May be needed both before and after RbfA during the maturation of 16S rRNA. It has affinity for free ribosomal 30S subunits but not for 70S ribosomes. The sequence is that of Ribosome maturation factor RimM from Sodalis glossinidius (strain morsitans).